A 220-amino-acid chain; its full sequence is Flagellin A2 (220 aa).

The propeptide occupies 1–11 (MFNNITDDDRG). N-linked (GlcNAc...) asparagine glycans are attached at residues Asn-78, Asn-95, Asn-112, and Asn-124.

It belongs to the archaeal flagellin family. Glycosylated by a pentasaccharide similar to the S-layer glycoprotein, probably comprising a hexose, 2 hexuronic acids, a methyl ester of a hexuronic acid and mannose.

It is found in the archaeal flagellum. Functionally, flagellin that plays both structural and regulatory roles in flagella biosynthesis. Does not constitute a major flagellin in terms of abundance contrary to FlgA1: may regulate the flagella-dependent swimming motility depending on the relative abundance of FlgA1. Not involved in PibD-dependent surface adhesion. In Haloferax volcanii (strain ATCC 29605 / DSM 3757 / JCM 8879 / NBRC 14742 / NCIMB 2012 / VKM B-1768 / DS2) (Halobacterium volcanii), this protein is Flagellin A2 (flgA2).